A 294-amino-acid chain; its full sequence is Pyridoxal 5'-phosphate synthase subunit PdxS (294 aa).

Residue aspartate 24 coordinates D-ribose 5-phosphate. Residue lysine 81 is the Schiff-base intermediate with D-ribose 5-phosphate of the active site. Glycine 153 provides a ligand contact to D-ribose 5-phosphate. Arginine 165 lines the D-glyceraldehyde 3-phosphate pocket. D-ribose 5-phosphate-binding positions include glycine 214 and 235-236 (GS).

The protein belongs to the PdxS/SNZ family. Homohexamer and homododecamer. In the presence of PdxT, forms a dodecamer of heterodimers.

It catalyses the reaction aldehydo-D-ribose 5-phosphate + D-glyceraldehyde 3-phosphate + L-glutamine = pyridoxal 5'-phosphate + L-glutamate + phosphate + 3 H2O + H(+). The protein operates within cofactor biosynthesis; pyridoxal 5'-phosphate biosynthesis. Catalyzes the formation of pyridoxal 5'-phosphate from ribose 5-phosphate (RBP), glyceraldehyde 3-phosphate (G3P) and ammonia. The ammonia is provided by the PdxT subunit. Can also use ribulose 5-phosphate and dihydroxyacetone phosphate as substrates, resulting from enzyme-catalyzed isomerization of RBP and G3P, respectively. The sequence is that of Pyridoxal 5'-phosphate synthase subunit PdxS from Geobacillus kaustophilus (strain HTA426).